The sequence spans 460 residues: Ribosomal protein uS12 methylthiotransferase RimO (460 aa).

Residues 9-119 enclose the MTTase N-terminal domain; that stretch reads PKVGFVSLGC…VMEAVHAALP (111 aa). 6 residues coordinate [4Fe-4S] cluster: cysteine 18, cysteine 54, cysteine 83, cysteine 150, cysteine 154, and cysteine 157. The 239-residue stretch at 136 to 374 folds into the Radical SAM core domain; that stretch reads LTPRHYAYLK…AKQAEISALR (239 aa). Positions 376-444 constitute a TRAM domain; it reads EAKIGSVQQC…EHDLFGDALP (69 aa).

The protein belongs to the methylthiotransferase family. RimO subfamily. [4Fe-4S] cluster is required as a cofactor.

Its subcellular location is the cytoplasm. The catalysed reaction is L-aspartate(89)-[ribosomal protein uS12]-hydrogen + (sulfur carrier)-SH + AH2 + 2 S-adenosyl-L-methionine = 3-methylsulfanyl-L-aspartate(89)-[ribosomal protein uS12]-hydrogen + (sulfur carrier)-H + 5'-deoxyadenosine + L-methionine + A + S-adenosyl-L-homocysteine + 2 H(+). Catalyzes the methylthiolation of an aspartic acid residue of ribosomal protein uS12. This chain is Ribosomal protein uS12 methylthiotransferase RimO, found in Xanthomonas oryzae pv. oryzae (strain PXO99A).